The following is a 312-amino-acid chain: Peroxidase (312 aa).

An N-terminal signal peptide occupies residues 1–23; the sequence is MAMGSASCISLVVLVALATAASG. Pyrrolidone carboxylic acid is present on Gln-24. Disulfide bonds link Cys-34/Cys-107, Cys-67/Cys-70, Cys-113/Cys-307, and Cys-192/Cys-218. His-65 (proton acceptor) is an active-site residue. Ca(2+) is bound by residues Asp-66, Gly-69, Asp-71, and Ser-73. Pro-155 contributes to the substrate binding site. Position 185 (His-185) interacts with heme b. Thr-186 contacts Ca(2+). The Ca(2+) site is built by Asp-231, Thr-234, and Asp-239. An N-linked (GlcNAc...) asparagine glycan is attached at Asn-262.

This sequence belongs to the peroxidase family. Classical plant (class III) peroxidase subfamily. Ca(2+) serves as cofactor. Requires heme b as cofactor. In terms of tissue distribution, root.

It is found in the secreted. It carries out the reaction 2 a phenolic donor + H2O2 = 2 a phenolic radical donor + 2 H2O. Functionally, removal of H(2)O(2), oxidation of toxic reductants, biosynthesis and degradation of lignin, suberization, auxin catabolism, response to environmental stresses such as wounding, pathogen attack and oxidative stress. These functions might be dependent on each isozyme/isoform in each plant tissue. Its function is as follows. Involved in defense response to powdery meldew fungus. This chain is Peroxidase, found in Triticum aestivum (Wheat).